Reading from the N-terminus, the 178-residue chain is Large ribosomal subunit protein uL6 (178 aa).

It belongs to the universal ribosomal protein uL6 family. As to quaternary structure, part of the 50S ribosomal subunit.

Functionally, this protein binds to the 23S rRNA, and is important in its secondary structure. It is located near the subunit interface in the base of the L7/L12 stalk, and near the tRNA binding site of the peptidyltransferase center. The polypeptide is Large ribosomal subunit protein uL6 (Symbiobacterium thermophilum (strain DSM 24528 / JCM 14929 / IAM 14863 / T)).